A 670-amino-acid chain; its full sequence is DNA ligase (670 aa).

NAD(+) is bound by residues 34–38 (DAEYD), 83–84 (SL), and Glu112. Lys114 serves as the catalytic N6-AMP-lysine intermediate. 4 residues coordinate NAD(+): Arg135, Glu169, Lys285, and Lys309. Zn(2+)-binding residues include Cys403, Cys406, Cys421, and Cys426. In terms of domain architecture, BRCT spans 589–670 (PASSVLAGKT…FLQEISREEQ (82 aa)).

The protein belongs to the NAD-dependent DNA ligase family. LigA subfamily. It depends on Mg(2+) as a cofactor. The cofactor is Mn(2+).

The enzyme catalyses NAD(+) + (deoxyribonucleotide)n-3'-hydroxyl + 5'-phospho-(deoxyribonucleotide)m = (deoxyribonucleotide)n+m + AMP + beta-nicotinamide D-nucleotide.. DNA ligase that catalyzes the formation of phosphodiester linkages between 5'-phosphoryl and 3'-hydroxyl groups in double-stranded DNA using NAD as a coenzyme and as the energy source for the reaction. It is essential for DNA replication and repair of damaged DNA. This chain is DNA ligase, found in Geobacillus thermodenitrificans (strain NG80-2).